Consider the following 404-residue polypeptide: MKTPIYLDYAATTPVEFEVAKKMMNYLTIDGVFGNSASRSHKFGWKAEEVVDIARNQISELIGADSREIVFTSGATESNNLAIKGIASFHQNKGKHIVTSKTEHKSVLDTCRYLENKGFTVTYLTPKNNGIIDLNNLKKNIKKDTILVSIMHVNNEIGIIQDINSISQICRNHGVFFHVDATQSVGKIPIDLKKIPIDLMSFSAHKIYGPKGIGGLYVRRKPRVRLLSLIHGGGHERGMRSGTLPVHQIVGMGESFVLAKRKIHDDFIHLTKLKNILWNGIKNIEEVYLNSDLQQGAPHILNVSFNYVEGESLIMALKDLAISSGSACTSASLEPSYVLKSLGIRDELAHSSIRFSIGRFTTEKEIIHAIKLVHKSIHRLRELSPLWEMFKSGVDLNSIEWDHV.

Pyridoxal 5'-phosphate is bound by residues 75–76 (AT), Asn-155, Gln-183, and 203–205 (SAH). Position 206 is an N6-(pyridoxal phosphate)lysine (Lys-206). Position 243 (Thr-243) interacts with pyridoxal 5'-phosphate. Cys-328 serves as the catalytic Cysteine persulfide intermediate. A [2Fe-2S] cluster-binding site is contributed by Cys-328.

This sequence belongs to the class-V pyridoxal-phosphate-dependent aminotransferase family. NifS/IscS subfamily. In terms of assembly, homodimer. Forms a heterotetramer with IscU, interacts with other sulfur acceptors. It depends on pyridoxal 5'-phosphate as a cofactor.

Its subcellular location is the cytoplasm. It carries out the reaction (sulfur carrier)-H + L-cysteine = (sulfur carrier)-SH + L-alanine. It participates in cofactor biosynthesis; iron-sulfur cluster biosynthesis. In terms of biological role, master enzyme that delivers sulfur to a number of partners involved in Fe-S cluster assembly, tRNA modification or cofactor biosynthesis. Catalyzes the removal of elemental sulfur atoms from cysteine to produce alanine. Functions as a sulfur delivery protein for Fe-S cluster synthesis onto IscU, an Fe-S scaffold assembly protein, as well as other S acceptor proteins. This Buchnera aphidicola subsp. Acyrthosiphon pisum (strain 5A) protein is Cysteine desulfurase IscS.